The sequence spans 209 residues: Prolactin (209 aa).

A signal peptide spans 1 to 24 (MAQRFKGSNLFLTALLCLASQGHA). 2 disulfide bridges follow: Cys70/Cys184 and Cys201/Cys209.

The protein belongs to the somatotropin/prolactin family.

It localises to the secreted. This Anguilla japonica (Japanese eel) protein is Prolactin (prl).